The sequence spans 559 residues: Methionine--tRNA ligase (559 aa).

Residues 10–20 carry the 'HIGH' region motif; the sequence is PYINAVPHLGT. Residues cysteine 141, cysteine 144, cysteine 154, and cysteine 157 each contribute to the Zn(2+) site. The 'KMSKS' region signature appears at 331–335; sequence KFSKS. Lysine 334 is an ATP binding site.

Belongs to the class-I aminoacyl-tRNA synthetase family. MetG type 1 subfamily. Zn(2+) serves as cofactor.

It is found in the cytoplasm. The enzyme catalyses tRNA(Met) + L-methionine + ATP = L-methionyl-tRNA(Met) + AMP + diphosphate. Is required not only for elongation of protein synthesis but also for the initiation of all mRNA translation through initiator tRNA(fMet) aminoacylation. The chain is Methionine--tRNA ligase from Korarchaeum cryptofilum (strain OPF8).